The primary structure comprises 505 residues: MVSIRPDEISSILKQQITDYDQSVSVSNVGTVLQIGDGIARIYGLDQVMAGELLEFEDGTEGIALNLEDDNVGAVLMGEALGVQEGSNVKSTGKIASVPVGEAMQGRVVNPLGQPIDGKGEIPTSDTRLIEEMAPGIIKRRSVHEPMQTGITSIDAMIPVGRGQRELIIGDRQTGKSAIAIDTIINQKGQDVVCVYVAIGQKSASVANIVEVLRERGALDYTVVVSAGASEPAALQYLAPYTGAAIAEHFMYQGKATLVIYDDLTKQAQAYRQMSLLLKRPPGREAYPGDVFYLHSRLLERAAKLSDAMGGGSMTALPIIETQAGDVSAYIPTNVISITDGQIFLSADLFNSGLRPAINVGISVSRVGGAAQTKAIKKIAGTLKLELAQFDELAAFSQFASDLDEATQQQLERGKRLRELLKQPQFSPLNLAEQVAVVYAGVKGLIDEVPVEEVTKFATELREYLKLNKAEFIEEILKEKKLNDGLEATLKEVINEVKSSMLATV.

170–177 (GDRQTGKS) is a binding site for ATP.

The protein belongs to the ATPase alpha/beta chains family. As to quaternary structure, F-type ATPases have 2 components, CF(1) - the catalytic core - and CF(0) - the membrane proton channel. CF(1) has five subunits: alpha(3), beta(3), gamma(1), delta(1), epsilon(1). CF(0) has four main subunits: a(1), b(1), b'(1) and c(9-12).

Its subcellular location is the cellular thylakoid membrane. It catalyses the reaction ATP + H2O + 4 H(+)(in) = ADP + phosphate + 5 H(+)(out). Functionally, produces ATP from ADP in the presence of a proton gradient across the membrane. The alpha chain is a regulatory subunit. This is ATP synthase subunit alpha from Prochlorococcus marinus (strain MIT 9215).